A 188-amino-acid polypeptide reads, in one-letter code: Adenine phosphoribosyltransferase (188 aa).

This sequence belongs to the purine/pyrimidine phosphoribosyltransferase family. In terms of assembly, homodimer.

Its subcellular location is the cytoplasm. The enzyme catalyses AMP + diphosphate = 5-phospho-alpha-D-ribose 1-diphosphate + adenine. It participates in purine metabolism; AMP biosynthesis via salvage pathway; AMP from adenine: step 1/1. In terms of biological role, catalyzes a salvage reaction resulting in the formation of AMP, that is energically less costly than de novo synthesis. The chain is Adenine phosphoribosyltransferase from Neisseria meningitidis serogroup C (strain 053442).